The chain runs to 4083 residues: Dynein axonemal heavy chain 3 (4083 aa).

Disordered stretches follow at residues 1-37 (MSDT…VSAN) and 111-132 (DKTS…PSKK). The interval 1-1357 (MSDTNCSAQK…HVQMITTEAL (1357 aa)) is stem. Coiled coils occupy residues 1026–1052 (IKPI…AWLK) and 1108–1133 (RMTE…YLEK). AAA stretches follow at residues 1358–1579 (YGYE…VLTA), 1639–1870 (EALN…LHCK), 2003–2251 (TIPA…VIQG), and 2362–2613 (EFNS…LLRH). ATP is bound by residues 1396–1403 (GPAGTGKT), 1677–1684 (GDPMGGKT), 2041–2048 (GPTGTGKS), and 2401–2408 (GIGGSGRQ). The segment at 2628-2927 (FKTLLNSKRQ…NSLEKNIEIC (300 aa)) is stalk. The stretch at 2651–2714 (QKLEFASSQV…DEKEANAAAA (64 aa)) forms a coiled coil. AAA stretches follow at residues 3012–3242 (LGDP…EISE) and 3455–3679 (IQNF…QIQM).

It belongs to the dynein heavy chain family. In terms of assembly, consists of at least two heavy chains and a number of intermediate and light chains.

Its subcellular location is the cytoplasm. The protein resides in the cytoskeleton. The protein localises to the cilium axoneme. Force generating protein of respiratory cilia. Produces force towards the minus ends of microtubules. Dynein has ATPase activity; the force-producing power stroke is thought to occur on release of ADP. Involved in sperm motility; implicated in sperm flagellar assembly. The protein is Dynein axonemal heavy chain 3 (Dnah3) of Mus musculus (Mouse).